The chain runs to 888 residues: Autotaxin (888 aa).

An N-terminal signal peptide occupies residues 1-27 (MARRRSCQLHQVISLFTFAVGVNICLG). Residues 28–35 (VTANRIKR) constitute a propeptide, removed by furin. N-linked (GlcNAc...) asparagine glycosylation is present at asparagine 54. SMB domains follow at residues 55 to 98 (ISGS…LKTA) and 99 to 143 (GGWE…GESH). Disulfide bonds link cysteine 59/cysteine 76, cysteine 63/cysteine 94, cysteine 74/cysteine 87, cysteine 80/cysteine 86, cysteine 103/cysteine 120, cysteine 108/cysteine 138, cysteine 118/cysteine 131, cysteine 124/cysteine 130, cysteine 149/cysteine 195, and cysteine 157/cysteine 351. The Cell attachment site signature appears at 127 to 129 (RGD). Positions 145–502 (VDDDCEEIKT…PTFKYKTKVP (358 aa)) are phosphodiesterase. Positions 172 and 210 each coordinate Zn(2+). Threonine 210 serves as the catalytic Nucleophile. The 1-(9Z-octadecenoyl)-sn-glycero-3-phosphate site is built by threonine 210, asparagine 231, and aspartate 312. Residues threonine 210, asparagine 231, and aspartate 312 each contribute to the 1-hexadecanoyl-sn-glycero-3-phosphate site. Threonine 210, asparagine 231, and aspartate 312 together coordinate 1-tetradecanoyl-sn-glycerol 3-phosphate. Zn(2+) is bound by residues aspartate 312, histidine 316, aspartate 359, and histidine 360. Disulfide bonds link cysteine 367/cysteine 469, cysteine 414/cysteine 831, cysteine 567/cysteine 692, cysteine 569/cysteine 677, and cysteine 800/cysteine 810. N-linked (GlcNAc...) asparagine glycosylation is present at asparagine 411. Histidine 475 contributes to the Zn(2+) binding site. Histidine 475 lines the 1-(9Z-octadecenoyl)-sn-glycero-3-phosphate pocket. Histidine 475 contributes to the 1-hexadecanoyl-sn-glycero-3-phosphate binding site. 1-tetradecanoyl-sn-glycerol 3-phosphate is bound at residue histidine 475. An N-linked (GlcNAc...) asparagine glycan is attached at asparagine 525. Residues 623-888 (LYGRPAVLYR…TYLQTYESEI (266 aa)) are nuclease-like domain. Aspartate 765, aspartate 767, aspartate 769, leucine 771, and aspartate 773 together coordinate Ca(2+). The N-linked (GlcNAc...) asparagine glycan is linked to asparagine 832. The interval 855–876 (IEHLTSLDFFRKTSRSYPEILT) is required for secretion.

This sequence belongs to the nucleotide pyrophosphatase/phosphodiesterase family. The cofactor is Zn(2+). Requires Ca(2+) as cofactor. In terms of processing, N-glycosylation, but not furin-cleavage, plays a critical role on secretion and on lysoPLD activity. Post-translationally, the interdomain disulfide bond between Cys-414 and Cys-831 is essential for catalytic activity. As to expression, detected in fetal serum (at protein level).

It localises to the secreted. It carries out the reaction a 1-O-alkyl-sn-glycero-3-phosphoethanolamine + H2O = a 1-O-alkyl-sn-glycero-3-phosphate + ethanolamine + H(+). The enzyme catalyses a 1-acyl-sn-glycero-3-phosphoethanolamine + H2O = a 1-acyl-sn-glycero-3-phosphate + ethanolamine + H(+). The catalysed reaction is 1-(9Z-octadecenoyl)-sn-glycero-3-phosphoethanolamine + H2O = 1-(9Z-octadecenoyl)-sn-glycero-3-phosphate + ethanolamine + H(+). It catalyses the reaction a 1-O-alkyl-sn-glycero-3-phosphocholine + H2O = a 1-O-alkyl-sn-glycero-3-phosphate + choline + H(+). It carries out the reaction 1-O-(9Z-octadecenyl)-sn-glycero-3-phosphocholine + H2O = 1-O-(9Z-octadecenyl)-sn-glycero-3-phosphate + choline + H(+). The enzyme catalyses 1-O-hexadecyl-sn-glycero-3-phosphocholine + H2O = 1-O-hexadecyl-sn-glycero-3-phosphate + choline + H(+). The catalysed reaction is a 1-O-(1Z-alkenyl)-sn-glycero-3-phosphocholine + H2O = a 1-O-(1Z-alkenyl)-sn-glycero-3-phosphate + choline + H(+). It catalyses the reaction a 1-acyl-sn-glycero-3-phosphocholine + H2O = a 1-acyl-sn-glycero-3-phosphate + choline + H(+). It carries out the reaction 1-dodecanoyl-sn-glycero-3-phosphocholine + H2O = 1-dodecanoyl-sn-glycerol 3-phosphate + choline + H(+). The enzyme catalyses 1-(9Z-octadecenoyl)-sn-glycero-3-phosphocholine + H2O = 1-(9Z-octadecenoyl)-sn-glycero-3-phosphate + choline + H(+). The catalysed reaction is 1-tetradecanoyl-sn-glycero-3-phosphocholine + H2O = 1-tetradecanoyl-sn-glycerol 3-phosphate + choline + H(+). It catalyses the reaction 1-decanoyl-sn-glycero-3-phosphocholine + H2O = 1-decanoyl-sn-glycero-3-phosphate + choline + H(+). It carries out the reaction 1-octadecanoyl-sn-glycero-3-phosphocholine + H2O = 1-octadecanoyl-sn-glycero-3-phosphate + choline + H(+). The enzyme catalyses 1-hexadecanoyl-sn-glycero-3-phosphocholine + H2O = 1-hexadecanoyl-sn-glycero-3-phosphate + choline + H(+). The catalysed reaction is 1-hexanoyl-sn-glycero-3-phosphocholine + H2O = 1-hexanoyl-sn-glycero-3-phosphate + choline + H(+). It catalyses the reaction 1-(9Z,12Z)-octadecadienoyl-sn-glycero-3-phosphocholine + H2O = 1-(9Z,12Z)-octadecadienoyl-sn-glycero-3-phosphate + choline + H(+). It carries out the reaction sphing-4-enine-phosphocholine + H2O = sphing-4-enine 1-phosphate + choline + H(+). The enzyme catalyses 1-(5Z,8Z,11Z,14Z-eicosatetraenoyl)-sn-glycero-3-phosphocholine + H2O = 1-(5Z,8Z,11Z,14Z-eicosatetraenoyl)-sn-glycero-3-phosphate + choline + H(+). The catalysed reaction is a 2-acyl-sn-glycero-3-phosphocholine + H2O = a 2-acyl-sn-glycerol 3-phosphate + choline + H(+). It catalyses the reaction a 1,2-diacyl-sn-glycero-3-phosphocholine + H2O = a 1,2-diacyl-sn-glycero-3-phosphate + choline + H(+). It carries out the reaction 1,2-dioctanoyl-sn-glycero-3-phosphocholine + H2O = 1,2-dioctanoyl-sn-glycero-3-phosphate + choline + H(+). The enzyme catalyses 1,2-didecanoyl-sn-glycero-3-phosphocholine + H2O = 1,2-didecanoyl-sn-glycero-3-phosphate + choline + H(+). The catalysed reaction is a 1-acyl-sn-glycero-3-phospho-L-serine + H2O = a 1-acyl-sn-glycero-3-phosphate + L-serine + H(+). It catalyses the reaction 1-(9Z-octadecenoyl)-sn-glycero-3-phospho-L-serine + H2O = 1-(9Z-octadecenoyl)-sn-glycero-3-phosphate + L-serine + H(+). It carries out the reaction a 2-acyl-sn-glycero-3-phospho-L-serine + H2O = a 2-acyl-sn-glycerol 3-phosphate + L-serine + H(+). Secreted lysophospholipase D that hydrolyzes lysophospholipids to produce the signaling molecule lysophosphatidic acid (LPA) in extracellular fluids. Its major substrate is lysophosphatidylcholine. Can also act on sphingosylphosphorylcholine producing sphingosine-1-phosphate, a modulator of cell motility. Can hydrolyze, in vitro, bis-pNPP, to some extent pNP-TMP, and barely ATP. Involved in several motility-related processes such as angiogenesis and neurite outgrowth. Acts as an angiogenic factor by stimulating migration of smooth muscle cells and microtubule formation. Stimulates migration of melanoma cells, probably via a pertussis toxin-sensitive G protein. May have a role in induction of parturition. Possible involvement in cell proliferation and adipose tissue development. Required for LPA production in activated platelets, cleaves the sn-1 lysophospholipids to generate sn-1 lysophosphatidic acids containing predominantly 18:2 and 20:4 fatty acids. Shows a preference for the sn-1 to the sn-2 isomer of 1-O-alkyl-sn-glycero-3-phosphocholine (lyso-PAF). This Bos taurus (Bovine) protein is Autotaxin.